Consider the following 217-residue polypeptide: ATP-dependent Clp protease proteolytic subunit (217 aa).

The active-site Nucleophile is Ser-121. His-146 is a catalytic residue.

This sequence belongs to the peptidase S14 family. As to quaternary structure, fourteen ClpP subunits assemble into 2 heptameric rings which stack back to back to give a disk-like structure with a central cavity, resembling the structure of eukaryotic proteasomes.

It localises to the cytoplasm. The enzyme catalyses Hydrolysis of proteins to small peptides in the presence of ATP and magnesium. alpha-casein is the usual test substrate. In the absence of ATP, only oligopeptides shorter than five residues are hydrolyzed (such as succinyl-Leu-Tyr-|-NHMec, and Leu-Tyr-Leu-|-Tyr-Trp, in which cleavage of the -Tyr-|-Leu- and -Tyr-|-Trp bonds also occurs).. Cleaves peptides in various proteins in a process that requires ATP hydrolysis. Has a chymotrypsin-like activity. Plays a major role in the degradation of misfolded proteins. The sequence is that of ATP-dependent Clp protease proteolytic subunit from Burkholderia mallei (strain NCTC 10247).